Reading from the N-terminus, the 1120-residue chain is Topless-related protein 1 (1120 aa).

The LisH domain maps to 4 to 36 (LSRELVFLILQFLDEEKFKETVHKLEQESGFFF). Residues 34–92 (FFFNMKYFEDEVHNGNWDEVEKYLSGFTKVDDNRYSMKIFFEIRKQKYLEALDRHDRPK) enclose the CTLH domain. 2 disordered regions span residues 210–235 (ARAP…PLGA) and 283–307 (HPRT…SKRT). At Ser214 the chain carries Phosphoserine. 14 WD repeats span residues 353-393 (SQGS…RLVQ), 415-454 (EPVV…DMRQ), 460-501 (AHVG…KRYT), 504-545 (GHEA…SRVD), 548-591 (APGR…VKRT), 595-634 (FHKR…LLTA), 639-678 (GGLQ…RLLH), 699-745 (ERPA…EPSQ), 755-794 (MRVT…RNAT), 822-860 (NPEE…TMAT), 863-903 (PPPP…VKSK), 906-945 (GHSK…KQKS), 999-1038 (ESAA…LRCR), and 1052-1091 (SNVH…GKWG). The interval 1087-1120 (EGKWGVAPPPENGSASAVTATPSVGASASDQPQR) is disordered. Over residues 1099–1120 (GSASAVTATPSVGASASDQPQR) the composition is skewed to polar residues.

Tetramer. Interacts with SNC1 (via TIR domain) and HDA19. Interacts with SPL (via EAR motif). Interacts with SPEAR3/TIE1. Binds to and corepresses GAF1/IDD2. In terms of tissue distribution, highly expressed in stamen primordium, microsporocyte, ovule primordium and megasporocyte during sporogenesis.

The protein localises to the nucleus. Transcriptional corepressor. Activates TIR-NB-LRR R protein-mediated immune responses through repression of negative regulators such as CNGC2/DND1. Negative regulator of jasmonate responses. The chain is Topless-related protein 1 (TPR1) from Arabidopsis thaliana (Mouse-ear cress).